A 380-amino-acid chain; its full sequence is Probable inactive dehydrogenase easA (380 aa).

Residues 25 to 27 (PMT), Ala60, Gln102, and His171 contribute to the FMN site. 2 residues coordinate substrate: His171 and Asn174. FMN-binding positions include Lys223, Gly299, 324–325 (GR), and Arg325. Tyr352 serves as a coordination point for substrate.

It belongs to the NADH:flavin oxidoreductase/NADH oxidase family.

In terms of biological role, probable inactive dehydrogenase; part of the gene cluster that mediates the biosynthesis of fungal ergot alkaloid. DmaW catalyzes the first step of ergot alkaloid biosynthesis by condensing dimethylallyl diphosphate (DMAP) and tryptophan to form 4-dimethylallyl-L-tryptophan. The second step is catalyzed by the methyltransferase easF that methylates 4-dimethylallyl-L-tryptophan in the presence of S-adenosyl-L-methionine, resulting in the formation of 4-dimethylallyl-L-abrine. The catalase easC and the FAD-dependent oxidoreductase easE then transform 4-dimethylallyl-L-abrine to chanoclavine-I which is further oxidized by easD in the presence of NAD(+), resulting in the formation of chanoclavine-I aldehyde. Agroclavine dehydrogenase easG then mediates the conversion of chanoclavine-I aldehyde to agroclavine via a non-enzymatic adduct reaction: the substrate is an iminium intermediate that is formed spontaneously from chanoclavine-I aldehyde in the presence of glutathione. The presence of easA is not required to complete this reaction. Further conversion of agroclavine to paspalic acid is a two-step process involving oxidation of agroclavine to elymoclavine and of elymoclavine to paspalic acid, the second step being performed by the elymoclavine oxidase cloA. Paspalic acid is then further converted to D-lysergic acid. Ergopeptines are assembled from D-lysergic acid and three different amino acids by the D-lysergyl-peptide-synthetases composed each of a monomudular and a trimodular nonribosomal peptide synthetase subunit. LpsB and lpsC encode the monomodular subunits responsible for D-lysergic acid activation and incorporation into the ergopeptine backbone. LpsA1 and A2 subunits encode the trimodular nonribosomal peptide synthetase assembling the tripeptide portion of ergopeptines. LpsA1 is responsible for formation of the major ergopeptine, ergotamine, and lpsA2 for alpha-ergocryptine, the minor ergopeptine of the total alkaloid mixture elaborated by C.purpurea. D-lysergyl-tripeptides are assembled by the nonribosomal peptide synthetases and released as N-(D-lysergyl-aminoacyl)-lactams. Cyclolization of the D-lysergyl-tripeptides is performed by the Fe(2+)/2-ketoglutarate-dependent dioxygenase easH which introduces a hydroxyl group into N-(D-lysergyl-aminoacyl)-lactam at alpha-C of the aminoacyl residue followed by spontaneous condensation with the terminal lactam carbonyl group. The polypeptide is Probable inactive dehydrogenase easA (Claviceps purpurea (Ergot fungus)).